Consider the following 723-residue polypeptide: Transient receptor potential cation channel subfamily V member 5 (723 aa).

Over 1 to 320 (MGVKKPWIQL…SLKWKKYGQP (320 aa)) the chain is Cytoplasmic. ANK repeat units follow at residues 72–101 (LGET…YLVT), 110–139 (VGQT…SASA), 156–185 (YGEH…DIRA), 189–222 (LGNT…GDHL), and 232–261 (QGLT…HIQW). The helical transmembrane segment at 321–341 (YFCLLGMLYIFYMICFTTCCV) threads the bilayer. At 342 to 378 (YRPLKFRDANRTHVRDNTVLEQKPLQEAYVTYQDKVR) the chain is on the extracellular side. A glycan (N-linked (GlcNAc...) asparagine) is linked at asparagine 351. Residues 379–401 (LVGELVTVIGAVVILLIEIPDIF) form a helical membrane-spanning segment. Residues 402–412 (RVGASRYFGHT) are Cytoplasmic-facing. A helical membrane pass occupies residues 413-435 (VLGGPFHVIIITYASLVLLIMVM). Over 436–441 (RLTSMN) the chain is Extracellular. A helical transmembrane segment spans residues 442–462 (GEVVPISMALVLGWCSVMYFS). Topologically, residues 463–485 (RGFQMLGPFTIMIQKMIFGDLLR) are cytoplasmic. A helical transmembrane segment spans residues 486-506 (FCWLMAMVILGFASAFYIIFQ). Positions 517–537 (SDYPTAMFSTFELFLTIIDGP) form an intramembrane region, pore-forming. Residue aspartate 535 coordinates Ca(2+). The chain crosses the membrane as a helical span at residues 550–570 (LTYFAFAIIATLLMLNLFIAM). At 571–723 (MGDTHWRVAQ…EGDGEEIYHF (153 aa)) the chain is on the cytoplasmic side. Positions 591-595 (VATTV) are interaction with S100A10. Residues 643–646 (AFKS) form an involved in Ca(2+)-dependent inactivation region. Residues 651–674 (EVQEQLSEKQPSGTETGTLARGSV) are disordered. Residues 654 to 667 (EQLSEKQPSGTETG) are compositionally biased toward polar residues. Threonine 678 carries the phosphothreonine modification. Serine 682 carries the post-translational modification Phosphoserine. The interval 693–723 (RGWEILRRNTLGHLNLGQDLGEGDGEEIYHF) is involved in Ca(2+)-dependent inactivation.

This sequence belongs to the transient receptor (TC 1.A.4) family. TrpV subfamily. TRPV5 sub-subfamily. In terms of assembly, homotetramer and probably heterotetramer with TRPV6. Interacts with TRPV6. Interacts with S100A10 and probably with the ANAX2-S100A10 heterotetramer. The interaction with S100A10 is required for the trafficking to the plasma membrane. Interacts with calmodulin. Interacts with BSPRY, which results in its inactivation. In terms of processing, glycosylated. As to expression, detected in kidney (at protein level). Detected in kidney.

The protein resides in the cell membrane. Its subcellular location is the apical cell membrane. The catalysed reaction is Ca(2+)(in) = Ca(2+)(out). Its activity is regulated as follows. Activated by WNK3. In terms of biological role, constitutively active calcium selective cation channel thought to be involved in Ca(2+) reabsorption in kidney and intestine. Required for normal Ca(2+) reabsorption in the kidney distal convoluted tubules. The channel is activated by low internal calcium level and the current exhibits an inward rectification. A Ca(2+)-dependent feedback regulation includes fast channel inactivation and slow current decay. Heteromeric assembly with TRPV6 seems to modify channel properties. TRPV5-TRPV6 heteromultimeric concatemers exhibit voltage-dependent gating. In Rattus norvegicus (Rat), this protein is Transient receptor potential cation channel subfamily V member 5 (Trpv5).